A 599-amino-acid chain; its full sequence is Serine/threonine-protein kinase haspin homolog (599 aa).

Residues 287 to 599 (PESIVKIGEG…FSDMLMDQIS (313 aa)) form the Protein kinase domain. Residues 293 to 301 (IGEGTYGEA), K310, 407 to 412 (EHGGKD), 448 to 453 (DLHWGN), and 486 to 488 (DFT) contribute to the ATP site. The active-site Proton acceptor is the D448.

It belongs to the protein kinase superfamily. Ser/Thr protein kinase family. Haspin subfamily. Expressed in meristems and primordia of root tips, lateral roots, shoot apex, leaves and flowers.

The protein localises to the cytoplasm. It is found in the perinuclear region. It localises to the nucleus. The protein resides in the chromosome. Its subcellular location is the cytoskeleton. The protein localises to the phragmoplast. The enzyme catalyses L-seryl-[protein] + ATP = O-phospho-L-seryl-[protein] + ADP + H(+). It catalyses the reaction L-threonyl-[protein] + ATP = O-phospho-L-threonyl-[protein] + ADP + H(+). In terms of biological role, threonine-protein kinase that phosphorylates histone H3 in vitro at 'Thr-3' (H3T3ph) and 'Thr-11' (H3T11ph), but not at 'Ser-10' (H3S10ph) or 'Ser-28' (H3S28ph). Plays a role in mitotic cell division during plant growth. Threonine-protein kinase that phosphorylates histone H3 in vitro at 'Thr-3' (H3T3ph), but not at 'Thr-11' (H3T11ph), 'Ser-10' (H3S10ph) or 'Ser-28' (H3S28ph). Involved in histone H3 phosphorylation in mitotic cells. Contributes to organ and plant development, as well as embryonic patterning. This chain is Serine/threonine-protein kinase haspin homolog, found in Arabidopsis thaliana (Mouse-ear cress).